The primary structure comprises 141 residues: Glutathione transferase FosA (141 aa).

One can recognise a VOC domain in the interval serine 4 to glycine 117. The Mn(2+) site is built by histidine 7, histidine 67, and glutamate 113.

This sequence belongs to the fosfomycin resistance protein family. Homodimer. Mn(2+) serves as cofactor.

The protein resides in the cytoplasm. The catalysed reaction is RX + glutathione = an S-substituted glutathione + a halide anion + H(+). Requires the monovalent cation K(+) for optimal activity. Its function is as follows. Metalloglutathione transferase which confers resistance to fosfomycin by catalyzing the addition of glutathione to fosfomycin. The chain is Glutathione transferase FosA (fosA) from Serratia marcescens.